The chain runs to 444 residues: Methylenetetrahydrofolate--tRNA-(uracil-5-)-methyltransferase TrmFO (444 aa).

10 to 15 (GAGLAG) contacts FAD.

The protein belongs to the MnmG family. TrmFO subfamily. FAD serves as cofactor.

Its subcellular location is the cytoplasm. It carries out the reaction uridine(54) in tRNA + (6R)-5,10-methylene-5,6,7,8-tetrahydrofolate + NADH + H(+) = 5-methyluridine(54) in tRNA + (6S)-5,6,7,8-tetrahydrofolate + NAD(+). It catalyses the reaction uridine(54) in tRNA + (6R)-5,10-methylene-5,6,7,8-tetrahydrofolate + NADPH + H(+) = 5-methyluridine(54) in tRNA + (6S)-5,6,7,8-tetrahydrofolate + NADP(+). Its function is as follows. Catalyzes the folate-dependent formation of 5-methyl-uridine at position 54 (M-5-U54) in all tRNAs. This Streptococcus pneumoniae (strain Taiwan19F-14) protein is Methylenetetrahydrofolate--tRNA-(uracil-5-)-methyltransferase TrmFO.